A 122-amino-acid polypeptide reads, in one-letter code: Large ribosomal subunit protein uL14 (122 aa).

This sequence belongs to the universal ribosomal protein uL14 family. As to quaternary structure, part of the 50S ribosomal subunit. Forms a cluster with proteins L3 and L19. In the 70S ribosome, L14 and L19 interact and together make contacts with the 16S rRNA in bridges B5 and B8.

Functionally, binds to 23S rRNA. Forms part of two intersubunit bridges in the 70S ribosome. In Bifidobacterium adolescentis (strain ATCC 15703 / DSM 20083 / NCTC 11814 / E194a), this protein is Large ribosomal subunit protein uL14.